Here is a 229-residue protein sequence, read N- to C-terminus: Cytochrome c oxidase subunit 2 (229 aa).

At 1 to 14 (MANPTHLGFQDAMS) the chain is on the mitochondrial intermembrane side. The helical transmembrane segment at 15–45 (PLMEELLYFHDHTLMILFLISSLVFYMIFAL) threads the bilayer. Topologically, residues 46-59 (LFPKLYYPNTSDVQ) are mitochondrial matrix. A helical transmembrane segment spans residues 60-87 (EVEVIWTVLPAIVLISIALPSLRTLYLM). The Mitochondrial intermembrane segment spans residues 88 to 229 (DETNNPCLTI…QLWLEDSILS (142 aa)). Residues His-161, Cys-196, Glu-198, Cys-200, His-204, and Met-207 each coordinate Cu cation. Glu-198 is a Mg(2+) binding site.

The protein belongs to the cytochrome c oxidase subunit 2 family. In terms of assembly, component of the cytochrome c oxidase (complex IV, CIV), a multisubunit enzyme composed of 14 subunits. The complex is composed of a catalytic core of 3 subunits MT-CO1, MT-CO2 and MT-CO3, encoded in the mitochondrial DNA, and 11 supernumerary subunits COX4I, COX5A, COX5B, COX6A, COX6B, COX6C, COX7A, COX7B, COX7C, COX8 and NDUFA4, which are encoded in the nuclear genome. The complex exists as a monomer or a dimer and forms supercomplexes (SCs) in the inner mitochondrial membrane with NADH-ubiquinone oxidoreductase (complex I, CI) and ubiquinol-cytochrome c oxidoreductase (cytochrome b-c1 complex, complex III, CIII), resulting in different assemblies (supercomplex SCI(1)III(2)IV(1) and megacomplex MCI(2)III(2)IV(2)). Found in a complex with TMEM177, COA6, COX18, COX20, SCO1 and SCO2. Interacts with TMEM177 in a COX20-dependent manner. Interacts with COX20. Interacts with COX16. Requires Cu cation as cofactor.

Its subcellular location is the mitochondrion inner membrane. It catalyses the reaction 4 Fe(II)-[cytochrome c] + O2 + 8 H(+)(in) = 4 Fe(III)-[cytochrome c] + 2 H2O + 4 H(+)(out). Its function is as follows. Component of the cytochrome c oxidase, the last enzyme in the mitochondrial electron transport chain which drives oxidative phosphorylation. The respiratory chain contains 3 multisubunit complexes succinate dehydrogenase (complex II, CII), ubiquinol-cytochrome c oxidoreductase (cytochrome b-c1 complex, complex III, CIII) and cytochrome c oxidase (complex IV, CIV), that cooperate to transfer electrons derived from NADH and succinate to molecular oxygen, creating an electrochemical gradient over the inner membrane that drives transmembrane transport and the ATP synthase. Cytochrome c oxidase is the component of the respiratory chain that catalyzes the reduction of oxygen to water. Electrons originating from reduced cytochrome c in the intermembrane space (IMS) are transferred via the dinuclear copper A center (CU(A)) of subunit 2 and heme A of subunit 1 to the active site in subunit 1, a binuclear center (BNC) formed by heme A3 and copper B (CU(B)). The BNC reduces molecular oxygen to 2 water molecules using 4 electrons from cytochrome c in the IMS and 4 protons from the mitochondrial matrix. The polypeptide is Cytochrome c oxidase subunit 2 (MT-CO2) (Alligator mississippiensis (American alligator)).